Here is a 919-residue protein sequence, read N- to C-terminus: MASLSRVLRVAATCPRGRAAWNLGLQPLATEARPTTEKSVPYQRTLKEEAQGASVVPQGPSQPLPSTANVVVIGGGSLGCQTLYHLAKLGVGGAVLLERERLTSGTTWHTAGLLWQLRPSDVEVELLAHTRQVVSRDLEEETGLHTGWIQNGGLFIASNQQRLNEYKRLMSLGKAYGIESHVLSPAETKSLYPLMNVDDLYGTLYVPQDGTMDPAGTCTTLTRAAVARGAQVIENCAVTGIRVRTDDFGVRRVAAVETEHGSIQTPCVVNCAGVWASKVGRMAGVKVPLVAMHHAYVVTERIEGIQNMPNVRDHDASVYLRLQGDALSVGGYEANPIFWEEVSDKFAFGLFDLDWDVFTQHIEGAINRVPVLEKTGIKSTVCGPESFTPDHKPLMGEAPELRGFFLGCGFNSAGMMLGGGCGQELAHWIVHGRPEKDMYSYDIRRFHHSLTDHTRWIRERSHESYAKNYSVVFPHDEPLAGRNMRRDPLHEELLGQGCVFQERQGWERPGWFNPQETAQVLDYDYYGAYGNQAHKDYTYSRLLGDEYTFDFPPHHHMIQKECLACRGAAAVFNMSYFGKFYLLGVDARKAADWLFSADVNRPPGSTVYTCMLNQRGGTESDLTVSRLAPGTQASPLVPAFEGDCYYLAVGGAVAQHNWSHINTVLQDQEFRCQLMDSSEDLGMLSIQGPASRDILQDVLDADLSNEAFPFSTHQLVRAAGHLVRAIRLSFVGELGWELHVPRASCLPVYRAVMAAGARHGLVNAGYRAIDSLSIEKGYRHWHADLRPDDSPLEAGLAFTCKLKTSVPFLGREALEKQRATGLRRRLICLTVEEEVPMFGLEAIWRNGQVVGHVRRADFGFTVNKTIAYGYIRDPSGGPVSLDFVKNGEYALERMGVTYAAQVHLKSPFDPDNKRVKGIY.

Residues methionine 1–asparagine 22 constitute a mitochondrion transit peptide. Lysine 38 carries the N6-succinyllysine modification. Histidine 109 bears the Tele-8alpha-FAD histidine mark. N6-acetyllysine; alternate is present on lysine 174. Lysine 174 is modified (N6-succinyllysine; alternate). Residues lysine 278, lysine 378, lysine 392, and lysine 535 each carry the N6-succinyllysine modification. Lysine 560 and lysine 776 each carry N6-acetyllysine. The residue at position 778 (tyrosine 778) is a Phosphotyrosine. Lysine 803, lysine 885, and lysine 905 each carry N6-acetyllysine; alternate. Lysine 803, lysine 885, and lysine 905 each carry N6-succinyllysine; alternate.

It belongs to the GcvT family. FAD serves as cofactor.

It is found in the mitochondrion matrix. It carries out the reaction (6S)-5,6,7,8-tetrahydrofolyl-(gamma-L-Glu)(n) + sarcosine + oxidized [electron-transfer flavoprotein] + H(+) = (6R)-5,10-methylenetetrahydrofolyl-(gamma-L-Glu)(n) + reduced [electron-transfer flavoprotein] + glycine. Its pathway is amine and polyamine degradation; sarcosine degradation; formaldehyde and glycine from sarcosine: step 1/1. Its function is as follows. Catalyzes the last step of the oxidative degradation of choline to glycine. Converts sarcosine into glycine. The sequence is that of Sarcosine dehydrogenase, mitochondrial from Mus musculus (Mouse).